A 181-amino-acid polypeptide reads, in one-letter code: Acireductone dioxygenase (181 aa).

His97, His99, Glu103, and His141 together coordinate Fe(2+). His97, His99, Glu103, and His141 together coordinate Ni(2+).

The protein belongs to the acireductone dioxygenase (ARD) family. As to quaternary structure, monomer. It depends on Fe(2+) as a cofactor. The cofactor is Ni(2+).

The enzyme catalyses 1,2-dihydroxy-5-(methylsulfanyl)pent-1-en-3-one + O2 = 3-(methylsulfanyl)propanoate + CO + formate + 2 H(+). It carries out the reaction 1,2-dihydroxy-5-(methylsulfanyl)pent-1-en-3-one + O2 = 4-methylsulfanyl-2-oxobutanoate + formate + 2 H(+). It functions in the pathway amino-acid biosynthesis; L-methionine biosynthesis via salvage pathway; L-methionine from S-methyl-5-thio-alpha-D-ribose 1-phosphate: step 5/6. Functionally, catalyzes 2 different reactions between oxygen and the acireductone 1,2-dihydroxy-3-keto-5-methylthiopentene (DHK-MTPene) depending upon the metal bound in the active site. Fe-containing acireductone dioxygenase (Fe-ARD) produces formate and 2-keto-4-methylthiobutyrate (KMTB), the alpha-ketoacid precursor of methionine in the methionine recycle pathway. Ni-containing acireductone dioxygenase (Ni-ARD) produces methylthiopropionate, carbon monoxide and formate, and does not lie on the methionine recycle pathway. This is Acireductone dioxygenase from Stutzerimonas stutzeri (strain A1501) (Pseudomonas stutzeri).